Reading from the N-terminus, the 177-residue chain is von Ebner gland protein 2 (177 aa).

Positions 1 to 18 (MKALLLTFSLSLLAALQA) are cleaved as a signal peptide. Cys80 and Cys172 form a disulfide bridge.

This sequence belongs to the calycin superfamily. Lipocalin family. Homodimer.

The protein localises to the secreted. Its function is as follows. Could play a role in taste reception. Could be necessary for the concentration and delivery of sapid molecules in the gustatory system. This chain is von Ebner gland protein 2 (Vegp2), found in Rattus norvegicus (Rat).